The chain runs to 830 residues: Ent-cassa-12,15-diene synthase (830 aa).

The segment at 1–50 (MMLLGSPSSGGYGGKFAGASPAGGTTTMAPSAKQPSSRAPPPGITGGRND) is disordered. A compositionally biased stretch (polar residues) spans 23–37 (GGTTTMAPSAKQPSS). The Mg(2+) site is built by aspartate 577, aspartate 581, asparagine 721, and glutamate 729. A DDXXD motif motif is present at residues 577–581 (DDLFD).

The protein belongs to the terpene synthase family. Mg(2+) serves as cofactor. In terms of tissue distribution, expressed in roots and stems.

The catalysed reaction is ent-copalyl diphosphate = ent-cassa-12,15-diene + diphosphate. Its function is as follows. Involved in phytocassane phytoalexins biosynthesis. Catalyzes the conversion of ent-copalyl diphosphate to the phytoalexin precursor ent-cassa-12,15-diene. The protein is Ent-cassa-12,15-diene synthase (KSL7) of Oryza sativa subsp. indica (Rice).